The chain runs to 61 residues: Small ribosomal subunit protein uS14 (61 aa).

Residues Cys24, Cys27, Cys40, and Cys43 each contribute to the Zn(2+) site.

Belongs to the universal ribosomal protein uS14 family. Zinc-binding uS14 subfamily. As to quaternary structure, part of the 30S ribosomal subunit. Contacts proteins S3 and S10. Zn(2+) serves as cofactor.

Functionally, binds 16S rRNA, required for the assembly of 30S particles and may also be responsible for determining the conformation of the 16S rRNA at the A site. In Borrelia duttonii (strain Ly), this protein is Small ribosomal subunit protein uS14.